The following is a 1084-amino-acid chain: Carbamoyl phosphate synthase large chain (1084 aa).

The carboxyphosphate synthetic domain stretch occupies residues 1–401; that stretch reads MPRRQDVEKV…ALLKAVRSLE (401 aa). ATP contacts are provided by arginine 129, arginine 169, glycine 175, glycine 176, arginine 208, leucine 210, glutamate 215, glycine 241, valine 242, histidine 243, glutamine 284, and glutamate 298. Residues 133–327 form the ATP-grasp 1 domain; it reads RALMKEIGEP…IAKVAAKIAV (195 aa). Glutamine 284, glutamate 298, and asparagine 300 together coordinate Mg(2+). 3 residues coordinate Mn(2+): glutamine 284, glutamate 298, and asparagine 300. Residues 402-546 form an oligomerization domain region; it reads TGRDGLFHPA…YSCYDEENEA (145 aa). Residues 547-947 are carbamoyl phosphate synthetic domain; that stretch reads VSPPGRKAVV…ALYKALLASG (401 aa). The ATP-grasp 2 domain maps to 672–862; the sequence is DQLLSDLSIP…LAKVATQVIA (191 aa). Arginine 708, arginine 747, glutamate 753, glycine 778, valine 779, histidine 780, serine 781, glutamine 821, and glutamate 833 together coordinate ATP. Mg(2+) is bound by residues glutamine 821, glutamate 833, and asparagine 835. Positions 821, 833, and 835 each coordinate Mn(2+). The MGS-like domain occupies 948–1084; sequence VRVPHRGTVL…VGISAVQDWV (137 aa). Residues 948–1084 form an allosteric domain region; it reads VRVPHRGTVL…VGISAVQDWV (137 aa).

It belongs to the CarB family. In terms of assembly, composed of two chains; the small (or glutamine) chain promotes the hydrolysis of glutamine to ammonia, which is used by the large (or ammonia) chain to synthesize carbamoyl phosphate. Tetramer of heterodimers (alpha,beta)4. Mg(2+) serves as cofactor. Requires Mn(2+) as cofactor.

The catalysed reaction is hydrogencarbonate + L-glutamine + 2 ATP + H2O = carbamoyl phosphate + L-glutamate + 2 ADP + phosphate + 2 H(+). The enzyme catalyses hydrogencarbonate + NH4(+) + 2 ATP = carbamoyl phosphate + 2 ADP + phosphate + 2 H(+). It participates in amino-acid biosynthesis; L-arginine biosynthesis; carbamoyl phosphate from bicarbonate: step 1/1. It functions in the pathway pyrimidine metabolism; UMP biosynthesis via de novo pathway; (S)-dihydroorotate from bicarbonate: step 1/3. Large subunit of the glutamine-dependent carbamoyl phosphate synthetase (CPSase). CPSase catalyzes the formation of carbamoyl phosphate from the ammonia moiety of glutamine, carbonate, and phosphate donated by ATP, constituting the first step of 2 biosynthetic pathways, one leading to arginine and/or urea and the other to pyrimidine nucleotides. The large subunit (synthetase) binds the substrates ammonia (free or transferred from glutamine from the small subunit), hydrogencarbonate and ATP and carries out an ATP-coupled ligase reaction, activating hydrogencarbonate by forming carboxy phosphate which reacts with ammonia to form carbamoyl phosphate. The chain is Carbamoyl phosphate synthase large chain from Symbiobacterium thermophilum (strain DSM 24528 / JCM 14929 / IAM 14863 / T).